The following is a 353-amino-acid chain: Protein MGF 360-11L (353 aa).

An ANK repeat occupies 59 to 88; that stretch reads ELNTVLMKAAKENNHDLIRLFVEWGADINY.

The protein belongs to the asfivirus MGF 360 family. Interacts with host TBK1 ad IRF7.

Plays a role in virus cell tropism, and may be required for efficient virus replication in macrophages. In addition, inhibits the phosphorylation of host TBK1 and IRF7 and thereby negatively regulates the host cGAS signaling pathway and antagonizes IFN-mediated antiviral activity. This is Protein MGF 360-11L from African swine fever virus (isolate Pig/Kenya/KEN-50/1950) (ASFV).